The chain runs to 111 residues: uncharacterized protein (111 aa).

It to A.fulgidus AF1864.

This is an uncharacterized protein from Aquifex aeolicus (strain VF5).